A 299-amino-acid polypeptide reads, in one-letter code: 4-diphosphocytidyl-2-C-methyl-D-erythritol kinase (299 aa).

Residue K18 is part of the active site. ATP is bound at residue 104 to 114; sequence PIASGIGGGSS. The active site involves D146.

It belongs to the GHMP kinase family. IspE subfamily.

It carries out the reaction 4-CDP-2-C-methyl-D-erythritol + ATP = 4-CDP-2-C-methyl-D-erythritol 2-phosphate + ADP + H(+). It functions in the pathway isoprenoid biosynthesis; isopentenyl diphosphate biosynthesis via DXP pathway; isopentenyl diphosphate from 1-deoxy-D-xylulose 5-phosphate: step 3/6. Its function is as follows. Catalyzes the phosphorylation of the position 2 hydroxy group of 4-diphosphocytidyl-2C-methyl-D-erythritol. The sequence is that of 4-diphosphocytidyl-2-C-methyl-D-erythritol kinase from Brucella melitensis biotype 1 (strain ATCC 23456 / CCUG 17765 / NCTC 10094 / 16M).